The following is a 251-amino-acid chain: Octanoyltransferase (251 aa).

Residues Asp-49–Leu-230 form the BPL/LPL catalytic domain. Substrate-binding positions include Arg-87–His-94, Ala-160–Gly-162, and Gly-173–Ala-175. Residue Cys-191 is the Acyl-thioester intermediate of the active site.

The protein belongs to the LipB family.

Its subcellular location is the cytoplasm. It catalyses the reaction octanoyl-[ACP] + L-lysyl-[protein] = N(6)-octanoyl-L-lysyl-[protein] + holo-[ACP] + H(+). It participates in protein modification; protein lipoylation via endogenous pathway; protein N(6)-(lipoyl)lysine from octanoyl-[acyl-carrier-protein]: step 1/2. In terms of biological role, catalyzes the transfer of endogenously produced octanoic acid from octanoyl-acyl-carrier-protein onto the lipoyl domains of lipoate-dependent enzymes. Lipoyl-ACP can also act as a substrate although octanoyl-ACP is likely to be the physiological substrate. This Corynebacterium efficiens (strain DSM 44549 / YS-314 / AJ 12310 / JCM 11189 / NBRC 100395) protein is Octanoyltransferase.